The sequence spans 65 residues: Small ribosomal subunit protein bS21 (65 aa).

A disordered region spans residues 45 to 65; it reads GRLKRSRSKRRAQRANEERNS. The segment covering 48–57 has biased composition (basic residues); sequence KRSRSKRRAQ.

This sequence belongs to the bacterial ribosomal protein bS21 family.

The protein is Small ribosomal subunit protein bS21 of Chlorobium luteolum (strain DSM 273 / BCRC 81028 / 2530) (Pelodictyon luteolum).